The chain runs to 37 residues: Large ribosomal subunit protein bL36 (37 aa).

The protein belongs to the bacterial ribosomal protein bL36 family.

The sequence is that of Large ribosomal subunit protein bL36 from Dechloromonas aromatica (strain RCB).